Here is a 222-residue protein sequence, read N- to C-terminus: Elongation factor 1-beta' (222 aa).

Positions 71–113 (SQGTSPLTAGAKPTAPAPAAKDDDDDDVDLFGSGDEEEDAEAE) are disordered. Positions 78-89 (TAGAKPTAPAPA) are enriched in low complexity. The segment covering 92-111 (DDDDDDVDLFGSGDEEEDAE) has biased composition (acidic residues).

Belongs to the EF-1-beta/EF-1-delta family. In terms of assembly, EF-1 is composed of 4 subunits: alpha, beta, beta' and gamma. In terms of processing, phosphorylated.

EF-1-beta and EF-1-beta' stimulate the exchange of GDP bound to EF-1-alpha to GTP. The protein is Elongation factor 1-beta' of Bombyx mori (Silk moth).